The sequence spans 1323 residues: ABC transporter gloK (1323 aa).

7 consecutive transmembrane segments (helical) span residues 6–26 (AIASIFTAIVCFKFIILTLEA), 102–122 (PHALLKVMLATFKGLLLAGIL), 138–158 (VAYGLIAAYAIVYIGIAVMST), 217–237 (IWASLIEIALSLWLLEVRLGV), 240–260 (VAAVFVIIGNICTLLGCVFGF), 325–345 (LLVGIVTLSYVSTTMAPVFAF), and 359–379 (PLLAASAYTSLTIFSLLGQAV). One can recognise an ABC transmembrane type-1 1 domain in the interval 142-380 (LIAAYAIVYI…IFSLLGQAVS (239 aa)). The ABC transporter 1 domain occupies 471-697 (IRDCSACWSK…SSYLESLGTR (227 aa)). Residue 503-510 (GPIGSGKS) participates in ATP binding. 7 consecutive transmembrane segments (helical) span residues 748 to 768 (GWVTWWVFVLLCSGFVFGLVF), 795 to 815 (YALWPLMAIVIFLGACAWLMI), 821 to 841 (AAIQFHGILLNSALSAPLVYF), 859 to 879 (LIDMELPTALIGTTVTFLSCI), 891 to 910 (YVAAAIPALIVFLYYIQLFY), 976 to 996 (LNLTLELAVAFLAIILVSIAL), and 1006 to 1026 (IGVALLSIVGFGLNLKTLVYT). The region spanning 752 to 1031 (WWVFVLLCSG…TLVYTWTSLE (280 aa)) is the ABC transmembrane type-1 2 domain. The 232-residue stretch at 1069 to 1300 (IRFQSVSAAY…PSFFASLLKA (232 aa)) folds into the ABC transporter 2 domain. 1103 to 1110 (GRTGSGKS) is a binding site for ATP.

It belongs to the ABC transporter superfamily. ABCC family. Conjugate transporter (TC 3.A.1.208) subfamily.

It is found in the cell membrane. 3-isopropylmalate dehydratase large subunit; part of the gene cluster that mediates the biosynthesis of pneumocandins, lipohexapeptides of the echinocandin family that prevent fungal cell wall formation by non-competitive inhibition of beta-1,3-glucan synthase. Possibly secretes antifungal pneumocandins, thus avoiding of intracellular accumulation and ameliorating the toxicity to the producing cells. This chain is ABC transporter gloK, found in Glarea lozoyensis (strain ATCC 20868 / MF5171).